The primary structure comprises 208 residues: Proheparin-binding EGF-like growth factor (208 aa).

The signal sequence occupies residues 1-19; sequence MKLLPSVVLKLFLAAVLSA. Residues 20-62 constitute a propeptide, or 72, or 73, or 76, or 81; sequence LVTGESLERLRRGLAAGTSNPDPPTVSTDQLLPLGGGRDRKVR. The Extracellular portion of the chain corresponds to 20–160; sequence LVTGESLERL…ENRLYTYDHT (141 aa). A disordered region spans residues 33 to 56; sequence LAAGTSNPDPPTVSTDQLLPLGGG. Polar residues predominate over residues 36–49; sequence GTSNPDPPTVSTDQ. A glycan (O-linked (GalNAc...) threonine) is linked at threonine 37. Serine 38 carries O-linked (GalNAc...) serine glycosylation. O-linked (GalNAc...) threonine glycans are attached at residues threonine 44, threonine 47, threonine 75, and threonine 85. A disordered region spans residues 82–104; the sequence is ALATPNKEEHGKRKKKGKGLGKK. The span at 93–102 shows a compositional bias: basic residues; sequence KRKKKGKGLG. Residues 104 to 144 enclose the EGF-like domain; the sequence is KRDPCLRKYKDFCIHGECKYVKELRAPSCICHPGYHGERCH. Intrachain disulfides connect cysteine 108–cysteine 121, cysteine 116–cysteine 132, and cysteine 134–cysteine 143. Residues 149–208 constitute a propeptide, C-terminal; that stretch reads PVENRLYTYDHTTILAVVAVVLSSVCLLVIVGLLMFRYHRRGGYDVENEEKVKLGMTNSH. The helical transmembrane segment at 161–184 threads the bilayer; the sequence is TILAVVAVVLSSVCLLVIVGLLMF. Topologically, residues 185-208 are cytoplasmic; sequence RYHRRGGYDVENEEKVKLGMTNSH.

As to quaternary structure, interacts with FBLN1. Interacts with EGFR and ERBB4. Post-translationally, several N-termini have been identified by direct sequencing. The forms with N-termini 63, 73 and 74 have been tested and found to be biologically active. O-glycosylated with core 1 or possibly core 8 glycans. Thr-47 is a minor glycosylation site compared to Thr-44.

It is found in the secreted. Its subcellular location is the extracellular space. It localises to the cell membrane. In terms of biological role, growth factor that mediates its effects via EGFR, ERBB2 and ERBB4. Required for normal cardiac valve formation and normal heart function. Promotes smooth muscle cell proliferation. May be involved in macrophage-mediated cellular proliferation. It is mitogenic for fibroblasts, but not endothelial cells. It is able to bind EGF receptor/EGFR with higher affinity than EGF itself and is a far more potent mitogen for smooth muscle cells than EGF. Also acts as a diphtheria toxin receptor. In Homo sapiens (Human), this protein is Proheparin-binding EGF-like growth factor (HBEGF).